Reading from the N-terminus, the 305-residue chain is Putative monooxygenase p33MONOX (305 aa).

The segment at 37-56 (LEDPAPMTPPPSDMGSVPWK) is disordered. The residue at position 44 (Thr-44) is a Phosphothreonine. The short motif at 67 to 77 (LAKVEEGEASL) is the Flavin-containing monooxygenase motif element. Disordered stretches follow at residues 158–236 (QSGE…KYDS) and 259–305 (QANR…PTGF). Residues 169–183 (PASAQSTPSTTPHSS) show a composition bias toward low complexity. At Thr-175 the chain carries Phosphothreonine. Ser-182 and Ser-183 each carry phosphoserine. Polar residues predominate over residues 193 to 210 (TSGSSTALPGPNPSTMDS).

Belongs to the P33MONOX family. As to quaternary structure, interacts with NELFB, NOL12 and PRNP. As to expression, down-regulated in the occipital lobe of an early stage Alzheimer disease patients.

It localises to the cytoplasm. Functionally, potential NADPH-dependent oxidoreductase. May be involved in the regulation of neuronal survival, differentiation and axonal outgrowth. This Homo sapiens (Human) protein is Putative monooxygenase p33MONOX (KIAA1191).